We begin with the raw amino-acid sequence, 431 residues long: Enolase (431 aa).

Gln167 provides a ligand contact to (2R)-2-phosphoglycerate. Catalysis depends on Glu209, which acts as the Proton donor. Mg(2+)-binding residues include Asp246, Glu290, and Asp317. Residues Lys342, Arg371, Ser372, and Lys393 each contribute to the (2R)-2-phosphoglycerate site. Catalysis depends on Lys342, which acts as the Proton acceptor.

Belongs to the enolase family. As to quaternary structure, component of the RNA degradosome, a multiprotein complex involved in RNA processing and mRNA degradation. Requires Mg(2+) as cofactor.

Its subcellular location is the cytoplasm. The protein localises to the secreted. It localises to the cell surface. It catalyses the reaction (2R)-2-phosphoglycerate = phosphoenolpyruvate + H2O. It functions in the pathway carbohydrate degradation; glycolysis; pyruvate from D-glyceraldehyde 3-phosphate: step 4/5. Functionally, catalyzes the reversible conversion of 2-phosphoglycerate (2-PG) into phosphoenolpyruvate (PEP). It is essential for the degradation of carbohydrates via glycolysis. The sequence is that of Enolase from Enterobacter sp. (strain 638).